A 350-amino-acid chain; its full sequence is Glucose-6-phosphate 3-dehydrogenase (350 aa).

The protein belongs to the Gfo/Idh/MocA family.

The catalysed reaction is D-glucose 6-phosphate + NAD(+) = 3-dehydro-D-glucose 6-phosphate + NADH + H(+). It participates in antibiotic biosynthesis; kanosamine biosynthesis. Its function is as follows. Involved in the biosynthesis of kanosamine (3-amino-3-deoxy-D-glucose), which is known to have antibiotic and antifungal properties, and to be a precursor of the antibiotic neotrehalosadiamine (3,3'-diamino-3,3'-dideoxy-alpha,beta-trehalose (NTD)). Catalyzes the oxidation of glucose 6-phosphate to 3-oxo-D-glucose 6-phosphate. It can only use NAD. This chain is Glucose-6-phosphate 3-dehydrogenase (ntdC), found in Bacillus subtilis (strain 168).